The chain runs to 355 residues: Methylthioribose-1-phosphate isomerase (355 aa).

Residues 47 to 49 (RGA), R91, and Q199 contribute to the substrate site. D240 functions as the Proton donor in the catalytic mechanism. A substrate-binding site is contributed by 250 to 251 (NK).

The protein belongs to the eIF-2B alpha/beta/delta subunits family. MtnA subfamily.

The enzyme catalyses 5-(methylsulfanyl)-alpha-D-ribose 1-phosphate = 5-(methylsulfanyl)-D-ribulose 1-phosphate. It participates in amino-acid biosynthesis; L-methionine biosynthesis via salvage pathway; L-methionine from S-methyl-5-thio-alpha-D-ribose 1-phosphate: step 1/6. In terms of biological role, catalyzes the interconversion of methylthioribose-1-phosphate (MTR-1-P) into methylthioribulose-1-phosphate (MTRu-1-P). The chain is Methylthioribose-1-phosphate isomerase from Oleidesulfovibrio alaskensis (strain ATCC BAA-1058 / DSM 17464 / G20) (Desulfovibrio alaskensis).